We begin with the raw amino-acid sequence, 197 residues long: Large ribosomal subunit protein mL58 (197 aa).

Residues 1-20 (MLFTIKPSFLKPVGFIQTRN) constitute a mitochondrion transit peptide.

Belongs to the mitochondrion-specific ribosomal protein mL58 family. In terms of assembly, component of the mitochondrial large ribosomal subunit (mt-LSU). Mature yeast 74S mitochondrial ribosomes consist of a small (37S) and a large (54S) subunit. The 37S small subunit contains a 15S ribosomal RNA (15S mt-rRNA) and at least 32 different proteins. The 54S large subunit contains a 21S rRNA (21S mt-rRNA) and at least 45 different proteins.

It is found in the mitochondrion. Functionally, component of the mitochondrial ribosome (mitoribosome), a dedicated translation machinery responsible for the synthesis of mitochondrial genome-encoded proteins, including at least some of the essential transmembrane subunits of the mitochondrial respiratory chain. The mitoribosomes are attached to the mitochondrial inner membrane and translation products are cotranslationally integrated into the membrane. The protein is Large ribosomal subunit protein mL58 (mrpl20) of Schizosaccharomyces pombe (strain 972 / ATCC 24843) (Fission yeast).